The primary structure comprises 137 residues: Small ribosomal subunit protein uS12 (137 aa).

Residues M31–P41 are compositionally biased toward polar residues. The disordered stretch occupies residues M31–K57. D102 carries the 3-methylthioaspartic acid modification.

Belongs to the universal ribosomal protein uS12 family. As to quaternary structure, part of the 30S ribosomal subunit. Contacts proteins S8 and S17. May interact with IF1 in the 30S initiation complex.

Its function is as follows. With S4 and S5 plays an important role in translational accuracy. Functionally, interacts with and stabilizes bases of the 16S rRNA that are involved in tRNA selection in the A site and with the mRNA backbone. Located at the interface of the 30S and 50S subunits, it traverses the body of the 30S subunit contacting proteins on the other side and probably holding the rRNA structure together. The combined cluster of proteins S8, S12 and S17 appears to hold together the shoulder and platform of the 30S subunit. This Oenococcus oeni (strain ATCC BAA-331 / PSU-1) protein is Small ribosomal subunit protein uS12.